The primary structure comprises 306 residues: Putative S-adenosyl-L-methionine-dependent methyltransferase MAP_4190c (306 aa).

Residues Asp129 and 158 to 159 (DL) contribute to the S-adenosyl-L-methionine site.

It belongs to the UPF0677 family.

Exhibits S-adenosyl-L-methionine-dependent methyltransferase activity. The sequence is that of Putative S-adenosyl-L-methionine-dependent methyltransferase MAP_4190c from Mycolicibacterium paratuberculosis (strain ATCC BAA-968 / K-10) (Mycobacterium paratuberculosis).